The primary structure comprises 142 residues: Alpha-lactalbumin (142 aa).

A signal peptide spans Met-1–Ala-19. The 123-residue stretch at Glu-20–Leu-142 folds into the C-type lysozyme domain. 4 disulfide bridges follow: Cys-25-Cys-139, Cys-47-Cys-130, Cys-80-Cys-96, and Cys-92-Cys-110. N-linked (GlcNAc...) asparagine glycans are attached at residues Asn-64 and Asn-93. Ca(2+)-binding residues include Lys-98, Asp-101, Asp-103, Asp-106, and Asp-107.

It belongs to the glycosyl hydrolase 22 family. In terms of assembly, lactose synthase (LS) is a heterodimer of a catalytic component, beta1,4-galactosyltransferase (beta4Gal-T1) and a regulatory component, alpha-lactalbumin (LA). As to expression, mammary gland specific. Secreted in milk.

The protein resides in the secreted. Functionally, regulatory subunit of lactose synthase, changes the substrate specificity of galactosyltransferase in the mammary gland making glucose a good acceptor substrate for this enzyme. This enables LS to synthesize lactose, the major carbohydrate component of milk. In other tissues, galactosyltransferase transfers galactose onto the N-acetylglucosamine of the oligosaccharide chains in glycoproteins. The chain is Alpha-lactalbumin (LALBA) from Ovis aries (Sheep).